A 127-amino-acid chain; its full sequence is Small ribosomal subunit protein uS11 (127 aa).

It belongs to the universal ribosomal protein uS11 family. Part of the 30S ribosomal subunit. Interacts with proteins S7 and S18. Binds to IF-3.

Functionally, located on the platform of the 30S subunit, it bridges several disparate RNA helices of the 16S rRNA. Forms part of the Shine-Dalgarno cleft in the 70S ribosome. The protein is Small ribosomal subunit protein uS11 of Streptococcus agalactiae serotype Ia (strain ATCC 27591 / A909 / CDC SS700).